A 209-amino-acid polypeptide reads, in one-letter code: Imidazole glycerol phosphate synthase subunit HisH (209 aa).

One can recognise a Glutamine amidotransferase type-1 domain in the interval 1 to 205 (MIAIIDYGMG…QGVVEAWKSS (205 aa)). The active-site Nucleophile is the cysteine 79. Catalysis depends on residues histidine 180 and glutamate 182.

In terms of assembly, heterodimer of HisH and HisF.

It is found in the cytoplasm. It carries out the reaction 5-[(5-phospho-1-deoxy-D-ribulos-1-ylimino)methylamino]-1-(5-phospho-beta-D-ribosyl)imidazole-4-carboxamide + L-glutamine = D-erythro-1-(imidazol-4-yl)glycerol 3-phosphate + 5-amino-1-(5-phospho-beta-D-ribosyl)imidazole-4-carboxamide + L-glutamate + H(+). It catalyses the reaction L-glutamine + H2O = L-glutamate + NH4(+). The protein operates within amino-acid biosynthesis; L-histidine biosynthesis; L-histidine from 5-phospho-alpha-D-ribose 1-diphosphate: step 5/9. Functionally, IGPS catalyzes the conversion of PRFAR and glutamine to IGP, AICAR and glutamate. The HisH subunit catalyzes the hydrolysis of glutamine to glutamate and ammonia as part of the synthesis of IGP and AICAR. The resulting ammonia molecule is channeled to the active site of HisF. In Bacillus cereus (strain G9842), this protein is Imidazole glycerol phosphate synthase subunit HisH.